Reading from the N-terminus, the 423-residue chain is Enolase (423 aa).

Residue glutamine 165 coordinates (2R)-2-phosphoglycerate. Glutamate 209 serves as the catalytic Proton donor. Mg(2+) contacts are provided by aspartate 244, glutamate 285, and aspartate 310. Lysine 335, arginine 364, serine 365, and lysine 386 together coordinate (2R)-2-phosphoglycerate. Residue lysine 335 is the Proton acceptor of the active site.

It belongs to the enolase family. Homooctamer formed by a tetramer of dimers. Mg(2+) serves as cofactor.

Its subcellular location is the cytoplasm. It localises to the secreted. The protein localises to the cell surface. It catalyses the reaction (2R)-2-phosphoglycerate = phosphoenolpyruvate + H2O. It participates in carbohydrate degradation; glycolysis; pyruvate from D-glyceraldehyde 3-phosphate: step 4/5. Its activity is regulated as follows. The covalent binding to the substrate causes inactivation of the enzyme, and possibly serves as a signal for the export of the protein. Catalyzes the reversible conversion of 2-phosphoglycerate (2-PG) into phosphoenolpyruvate (PEP). It is essential for the degradation of carbohydrates via glycolysis. In Methanocaldococcus jannaschii (strain ATCC 43067 / DSM 2661 / JAL-1 / JCM 10045 / NBRC 100440) (Methanococcus jannaschii), this protein is Enolase.